We begin with the raw amino-acid sequence, 292 residues long: Inositol monophosphatase 2 (292 aa).

The Mg(2+) site is built by Glu75, Asp94, Ile96, Asp97, and Asp231. Glu75 provides a ligand contact to substrate. Residues Ile96–Thr99 and Asp231 contribute to the substrate site.

This sequence belongs to the inositol monophosphatase superfamily. It depends on Mg(2+) as a cofactor.

It carries out the reaction a myo-inositol phosphate + H2O = myo-inositol + phosphate. It participates in polyol metabolism; myo-inositol biosynthesis; myo-inositol from D-glucose 6-phosphate: step 2/2. With respect to regulation, inhibited by Li(+) and Na(+). In terms of biological role, responsible for the provision of inositol required for synthesis of phosphatidylinositol and polyphosphoinositides and involved in the inositol cycle of calcium signaling. This Saccharomyces cerevisiae (strain ATCC 204508 / S288c) (Baker's yeast) protein is Inositol monophosphatase 2 (INM2).